A 410-amino-acid chain; its full sequence is Putative ribosomal large subunit pseudouridine synthase SVR1, chloroplastic (410 aa).

The N-terminal 35 residues, 1–35, are a transit peptide targeting the chloroplast; the sequence is MASVAASSSISFAASFLKIKAFPLSPRFFPIRTLR. A disordered region spans residues 96-143; sequence HNLAIDATTQNPKKKDKSKKKQPQATSSSSATTTASSPASHSEVKPKL. Positions 107-117 are enriched in basic residues; sequence PKKKDKSKKKQ. Over residues 118–135 the composition is skewed to low complexity; that stretch reads PQATSSSSATTTASSPAS. The region spanning 160 to 229 is the S4 RNA-binding domain; the sequence is QRLSKVLAAA…PKVYFALNKP (70 aa). Aspartate 274 acts as the Nucleophile in catalysis.

This sequence belongs to the pseudouridine synthase RsuA family. As to expression, highly expressed in young seedlings. Expressed in roots, rosette leaves, cauline leaves, stems and flowers.

It localises to the plastid. It is found in the chloroplast. Responsible for synthesis of pseudouridine in chloroplastic 23S ribosomal RNA. Necessary for normal chloroplast rRNA processing and translation. Required for normal chloroplast development and maintenance. May function in other plastids, such as root amyloplasts. The protein is Putative ribosomal large subunit pseudouridine synthase SVR1, chloroplastic (SVR1) of Arabidopsis thaliana (Mouse-ear cress).